Reading from the N-terminus, the 453-residue chain is UDP-glucose 6-dehydrogenase (453 aa).

Residues 2–19 (RLCV…AACF), Val11, Thr121, and Glu158 each bind NAD(+). Substrate contacts are provided by residues 154–158 (EFLKE), Lys210, Asn214, 255–259 (FIYAG), and Gly263. Cys266 acts as the Nucleophile in catalysis. Lys269 serves as a coordination point for NAD(+). Lys327 contributes to the substrate binding site. Arg334 is an NAD(+) binding site.

The protein belongs to the UDP-glucose/GDP-mannose dehydrogenase family.

The enzyme catalyses UDP-alpha-D-glucose + 2 NAD(+) + H2O = UDP-alpha-D-glucuronate + 2 NADH + 3 H(+). It functions in the pathway nucleotide-sugar biosynthesis; UDP-alpha-D-glucuronate biosynthesis; UDP-alpha-D-glucuronate from UDP-alpha-D-glucose: step 1/1. Its pathway is bacterial outer membrane biogenesis; lipopolysaccharide biosynthesis. The sequence is that of UDP-glucose 6-dehydrogenase (udg) from Pseudomonas aeruginosa (strain ATCC 15692 / DSM 22644 / CIP 104116 / JCM 14847 / LMG 12228 / 1C / PRS 101 / PAO1).